Here is a 216-residue protein sequence, read N- to C-terminus: Gamma-glutamylcyclotransferase 2-1 (216 aa).

Residue 5–10 (VFGYGS) participates in substrate binding. E87 functions as the Proton acceptor in the catalytic mechanism.

This sequence belongs to the gamma-glutamylcyclotransferase family. It depends on Mn(2+) as a cofactor. As to expression, expressed in the central vascular bundle of roots, leaf veins, hydathodes, cauline leaves, shoot apex, sepal veins, flower receptacles and developing seeds.

Its subcellular location is the cytoplasm. The catalysed reaction is an alpha-(gamma-L-glutamyl)-L-amino acid = 5-oxo-L-proline + an L-alpha-amino acid. Catalyzes the formation of 5-oxoproline from gamma-glutamyl dipeptides and plays a significant role in glutathione (GSH) homeostasis. Converts both GSH and gamma-glutamyl-L-alanine to 5-oxoproline in vitro. Plays a role in detoxification of heavy metals and metalloids by recycling glutamate and maintaining GSH homeostasis. In Arabidopsis thaliana (Mouse-ear cress), this protein is Gamma-glutamylcyclotransferase 2-1.